A 511-amino-acid polypeptide reads, in one-letter code: 2,3-bisphosphoglycerate-independent phosphoglycerate mutase (511 aa).

Asp-12 lines the Mn(2+) pocket. Tyr-36 is subject to Phosphotyrosine. Residue Ser-62 participates in Mn(2+) binding. Ser-62 acts as the Phosphoserine intermediate in catalysis. Substrate contacts are provided by residues His-123, 153-154, Arg-185, Arg-191, 261-264, and Lys-336; these read RD and RPDR. 5 residues coordinate Mn(2+): Asp-403, His-407, Asp-444, His-445, and His-462.

This sequence belongs to the BPG-independent phosphoglycerate mutase family. Monomer. Mn(2+) serves as cofactor.

The catalysed reaction is (2R)-2-phosphoglycerate = (2R)-3-phosphoglycerate. Its pathway is carbohydrate degradation; glycolysis; pyruvate from D-glyceraldehyde 3-phosphate: step 3/5. Functionally, catalyzes the interconversion of 2-phosphoglycerate and 3-phosphoglycerate. This Geobacillus kaustophilus (strain HTA426) protein is 2,3-bisphosphoglycerate-independent phosphoglycerate mutase.